The following is a 171-amino-acid chain: Ponticulin-like protein F (171 aa).

The N-terminal stretch at 1 to 20 (MKFIPALIIFVFTIFALTNS) is a signal peptide. Gly149 carries GPI-like-anchor amidated glycine lipidation. Positions 150-171 (TSSTIVIPFALILSLLLSVITL) are cleaved as a propeptide — removed in mature form.

This sequence belongs to the ponticulin family. The GPI-like-anchor contains a phosphoceramide group, rather than a phosphatidyl group.

It is found in the cell membrane. The chain is Ponticulin-like protein F (ponF) from Dictyostelium discoideum (Social amoeba).